The following is a 317-amino-acid chain: L-lactate dehydrogenase (317 aa).

NAD(+) contacts are provided by residues Val-17, Asp-38, Lys-43, Tyr-69, and 83–84 (GA). 2 residues coordinate substrate: Gln-86 and Arg-92. NAD(+)-binding positions include Ser-105, 122-124 (ATN), and Ser-147. A substrate-binding site is contributed by 124–127 (NPVD). 152-155 (DTAR) serves as a coordination point for substrate. Residues Arg-157 and His-172 each contribute to the beta-D-fructose 1,6-bisphosphate site. Residue His-179 is the Proton acceptor of the active site. Tyr-224 carries the phosphotyrosine modification. Thr-233 provides a ligand contact to substrate.

Belongs to the LDH/MDH superfamily. LDH family. As to quaternary structure, homotetramer.

The protein resides in the cytoplasm. It catalyses the reaction (S)-lactate + NAD(+) = pyruvate + NADH + H(+). The protein operates within fermentation; pyruvate fermentation to lactate; (S)-lactate from pyruvate: step 1/1. Allosterically activated by fructose 1,6-bisphosphate (FBP). In terms of biological role, catalyzes the conversion of lactate to pyruvate. This chain is L-lactate dehydrogenase, found in Geobacillus kaustophilus (strain HTA426).